Consider the following 195-residue polypeptide: Imidazole glycerol phosphate synthase subunit HisH (195 aa).

The 193-residue stretch at 1–193 (MIAIVDYGVG…RETTCNSTQQ (193 aa)) folds into the Glutamine amidotransferase type-1 domain. Catalysis depends on Cys78, which acts as the Nucleophile. Catalysis depends on residues His168 and Glu170.

Heterodimer of HisH and HisF.

The protein localises to the cytoplasm. The catalysed reaction is 5-[(5-phospho-1-deoxy-D-ribulos-1-ylimino)methylamino]-1-(5-phospho-beta-D-ribosyl)imidazole-4-carboxamide + L-glutamine = D-erythro-1-(imidazol-4-yl)glycerol 3-phosphate + 5-amino-1-(5-phospho-beta-D-ribosyl)imidazole-4-carboxamide + L-glutamate + H(+). The enzyme catalyses L-glutamine + H2O = L-glutamate + NH4(+). The protein operates within amino-acid biosynthesis; L-histidine biosynthesis; L-histidine from 5-phospho-alpha-D-ribose 1-diphosphate: step 5/9. IGPS catalyzes the conversion of PRFAR and glutamine to IGP, AICAR and glutamate. The HisH subunit catalyzes the hydrolysis of glutamine to glutamate and ammonia as part of the synthesis of IGP and AICAR. The resulting ammonia molecule is channeled to the active site of HisF. This Exiguobacterium sibiricum (strain DSM 17290 / CCUG 55495 / CIP 109462 / JCM 13490 / 255-15) protein is Imidazole glycerol phosphate synthase subunit HisH.